Reading from the N-terminus, the 763-residue chain is MSELLSFALFLASVLIYAWKAGRNTWWFAATLTVLGLFVVLNITLFASDYFTGDGINDAVLYTLTNSLTGAGVSKYILPGIGIVLGLTAVFGALGWILRRRRHHPHHFGYSLLALLLALGSVDASPAFRQITELVKSQSRDGDPDFAAYYKEPSKTIPDPKLNLVYIYGESLERTYFDNEAFPDLTPELGALKNEGLDFSHTQQLPGTDYTIAGMVASQCGIPLFAPFEGNASASVSSFFPQNICLGDILKNSGYQNYFVQGANLRFAGKDVFLKSHGFDHLYGSEELKSVVADPHYRNDWGFYDDTVLDEAWKKFEELSRSGQRFSLFTLTVDTHHPDGFISRTCNRKKYDFDGKPNQSFSAVSCSQENIAAFINKIKASPWFKDTVIVVSSDHLAMNNTAWKYLNKQDRNNLFFVIRGDKPQQETLAVKRNTMDNGATVLDILGGDNYLGLGRSSLSGQSMSEIFLNIKEKTLAWKPDIIRLWKFPKEMKEFTIDQQKNMIAFSGSHFRLPLLLRVSDKRVEPLPESEYSAPLRFQLADFAPRDNFVWVDRCYKMAQLWAPELALSTDWCVSQGQLGGQQIVQHVDKTMWKGKTAFKDTVIDMARYKSNVDTLKIVDNDIRYKADSFIFNVAGAPEEVKQFSGISRPESWGRWSNAQLGDEVKIEYKHPLPKKFDLVITAKAYGNNASRPIPVRVGNEEQTLVLGNEVTTTTLHFDNPTDADTLVIVPPEPVSTNEGNILGHSPRKLGIGMVEIKVVEREG.

Helical transmembrane passes span 1-21, 26-46, 77-97, and 108-128; these read MSELLSFALFLASVLIYAWKA, WWFAATLTVLGLFVVLNITLF, ILPGIGIVLGLTAVFGALGWI, and FGYSLLALLLALGSVDASPAF.

It belongs to the OpgB family.

The protein localises to the cell inner membrane. The enzyme catalyses a phosphatidylglycerol + a membrane-derived-oligosaccharide D-glucose = a 1,2-diacyl-sn-glycerol + a membrane-derived-oligosaccharide 6-(glycerophospho)-D-glucose.. Its pathway is glycan metabolism; osmoregulated periplasmic glucan (OPG) biosynthesis. Functionally, transfers a phosphoglycerol residue from phosphatidylglycerol to the membrane-bound nascent glucan backbones. The chain is Phosphoglycerol transferase I from Escherichia coli (strain SE11).